Consider the following 178-residue polypeptide: ATP synthase subunit b, chloroplastic (178 aa).

The chain crosses the membrane as a helical span at residues Ile23–Gly43.

This sequence belongs to the ATPase B chain family. As to quaternary structure, F-type ATPases have 2 components, F(1) - the catalytic core - and F(0) - the membrane proton channel. F(1) has five subunits: alpha(3), beta(3), gamma(1), delta(1), epsilon(1). F(0) has four main subunits: a(1), b(1), b'(1) and c(10-14). The alpha and beta chains form an alternating ring which encloses part of the gamma chain. F(1) is attached to F(0) by a central stalk formed by the gamma and epsilon chains, while a peripheral stalk is formed by the delta, b and b' chains.

The protein localises to the plastid. Its subcellular location is the chloroplast thylakoid membrane. In terms of biological role, f(1)F(0) ATP synthase produces ATP from ADP in the presence of a proton or sodium gradient. F-type ATPases consist of two structural domains, F(1) containing the extramembraneous catalytic core and F(0) containing the membrane proton channel, linked together by a central stalk and a peripheral stalk. During catalysis, ATP synthesis in the catalytic domain of F(1) is coupled via a rotary mechanism of the central stalk subunits to proton translocation. Component of the F(0) channel, it forms part of the peripheral stalk, linking F(1) to F(0). The sequence is that of ATP synthase subunit b, chloroplastic from Tetradesmus obliquus (Green alga).